A 116-amino-acid chain; its full sequence is Large ribosomal subunit protein bL17 (116 aa).

It belongs to the bacterial ribosomal protein bL17 family. Part of the 50S ribosomal subunit. Contacts protein L32.

The polypeptide is Large ribosomal subunit protein bL17 (Trichormus variabilis (strain ATCC 29413 / PCC 7937) (Anabaena variabilis)).